Here is a 493-residue protein sequence, read N- to C-terminus: Lysine--tRNA ligase (493 aa).

Residues Glu400 and Glu407 each contribute to the Mg(2+) site.

It belongs to the class-II aminoacyl-tRNA synthetase family. In terms of assembly, homodimer. The cofactor is Mg(2+).

It is found in the cytoplasm. It catalyses the reaction tRNA(Lys) + L-lysine + ATP = L-lysyl-tRNA(Lys) + AMP + diphosphate. In Syntrophomonas wolfei subsp. wolfei (strain DSM 2245B / Goettingen), this protein is Lysine--tRNA ligase.